Reading from the N-terminus, the 477-residue chain is Histidine permease HisP (477 aa).

The next 12 membrane-spanning stretches (helical) occupy residues 16-36 (ITMI…SGAT), 40-60 (AGPW…YFVM), 86-106 (PAFG…TIAV), 126-146 (IFSG…VGAF), 156-176 (IKVI…FGVL), 192-212 (HGFV…GFSF), 238-258 (SIFW…AAII), 284-304 (IGFA…VISS), 337-359 (IPFY…GIFG), 364-386 (LFLI…VSHI), 408-428 (WFPF…INLD), and 437-457 (WGEG…YFGY).

Belongs to the amino acid-polyamine-organocation (APC) superfamily. Amino acid transporter (AAT) (TC 2.A.3.1) family.

The protein resides in the cell membrane. Functionally, involved in histidine uptake. Has low affinity for arginine and lysine. Plays no significant role in the excretion of accumulated histidine. This Lactococcus lactis subsp. cremoris (strain MG1363) protein is Histidine permease HisP.